Here is a 499-residue protein sequence, read N- to C-terminus: Myocyte-specific enhancer factor 2A (499 aa).

Residues 3–57 form the MADS-box domain; that stretch reads RKKIQITRIMDERNRQVTFTKRKFGLMKKAYELSVLCDCEIALIIFNSSNKLFQY. Lys4 bears the N6-acetyllysine mark. A DNA-binding region (mef2-type) is located at residues 58–86; that stretch reads ASTDMDKVLLKYTEYNEPHESRTNSDIVE. At Lys117 the chain carries N6-acetyllysine. A compositionally biased stretch (low complexity) spans 173 to 185; that stretch reads TSTTMLSPPQTTL. Positions 173-269 are disordered; the sequence is TSTTMLSPPQ…GGGLGMNNRK (97 aa). Residues 210 to 233 are compositionally biased toward polar residues; sequence TDLTVPNGAGTSPVGNGVWNSRAS. Residues Lys248, Lys253, Lys269, and Lys281 each carry the N6-acetyllysine modification. The interval 265–282 is required for interaction with MAPKs; the sequence is MNNRKPDLRVVIPPSSKG. The beta domain stretch occupies residues 288 to 295; sequence TEEDELEL. A compositionally biased stretch (low complexity) spans 380–392; the sequence is VSGSQLSQGSNLS. The tract at residues 380–499 is disordered; the sequence is VSGSQLSQGS…KRMRMDTWVT (120 aa). Residue Lys402 is modified to N6-acetyllysine; alternate. Lys402 participates in a covalent cross-link: Glycyl lysine isopeptide (Lys-Gly) (interchain with G-Cter in SUMO); alternate. Residues 421 to 436 show a composition bias toward pro residues; it reads QQPPQQPQPPQPPQQP. Positions 445 to 458 are enriched in low complexity; the sequence is SPVDSLSSSSSSYD. Composition is skewed to basic and acidic residues over residues 459 to 469 and 480 to 499; these read GSDREDPRSDF and NSEDRESPSVKRMRMDTWVT.

Binds DNA as a homo- or heterodimer. In terms of processing, sumoylation on Lys-402 is enhanced by PIAS1 and represses transcriptional activity. Has no effect on nuclear location nor on DNA binding. Sumoylated by SUMO1 and, to a lesser extent by SUMO2 and SUMO3. Post-translationally, acetylation on Lys-402 activates transcriptional activity. Expressed in both embryonic and adult tissues with high expression in heart and skeletal muscle. Also expressed in gut, lung and brain of 15 dpc embryos and adults.

It is found in the nucleus. Functionally, transcriptional activator which binds specifically to the MEF2 element, 5'-YTA[AT](4)TAR-3', found in numerous muscle-specific genes. Mediates cellular functions in skeletal and cardiac muscle development,. This Gallus gallus (Chicken) protein is Myocyte-specific enhancer factor 2A (MEF2A).